The primary structure comprises 273 residues: MDKYVVFGNPIAQSKSPFIHTLFARQTAQKMEYTAELAPADGFKLAADNFFSAGGRGCNITAPFKEDAYQYATQLSERAKLAGAVNTLKKLDDGGILGDNTDGEGLVQDLLLNQVELAGKRILLVGAGGAARGVILPLLAQNPVELVITNRTLSKAQQLADLFAPFGSVSSAAIDTLNQPDFDVIINSTSAGLSGQLPGLSESLIKHDMVCYDMVYSAQITAFNLWARDLGAGKVIDGLGMLVGQAAESFMLWRGLRPGAKQVLRELRRILQE.

Residues 14 to 16 (SKS) and Thr-61 contribute to the shikimate site. Lys-65 serves as the catalytic Proton acceptor. Glu-77 is a binding site for NADP(+). Shikimate contacts are provided by Asn-86 and Asp-102. Residues 126 to 130 (GAGGA), 150 to 155 (NRTLSK), and Met-214 contribute to the NADP(+) site. Tyr-216 contributes to the shikimate binding site. Gly-238 is an NADP(+) binding site.

Belongs to the shikimate dehydrogenase family. As to quaternary structure, homodimer.

It carries out the reaction shikimate + NADP(+) = 3-dehydroshikimate + NADPH + H(+). The protein operates within metabolic intermediate biosynthesis; chorismate biosynthesis; chorismate from D-erythrose 4-phosphate and phosphoenolpyruvate: step 4/7. Functionally, involved in the biosynthesis of the chorismate, which leads to the biosynthesis of aromatic amino acids. Catalyzes the reversible NADPH linked reduction of 3-dehydroshikimate (DHSA) to yield shikimate (SA). The protein is Shikimate dehydrogenase (NADP(+)) of Photobacterium profundum (strain SS9).